Here is a 61-residue protein sequence, read N- to C-terminus: Metallothionein-1C (61 aa).

The interval 1 to 29 (MDPNCSCSTGGSCSCAGSCTCKACRCTSC) is beta. A divalent metal cation is bound by residues Cys5, Cys7, Cys13, Cys15, Cys19, Cys21, Cys24, Cys26, Cys29, Cys33, Cys34, Cys36, Cys37, Cys41, Cys44, Cys48, Cys50, Cys57, Cys59, and Cys60. The segment at 30 to 61 (KKSCCSCCPAGCARCAQGCICKGASDKCSCCA) is alpha.

Belongs to the metallothionein superfamily. Type 1 family. As to quaternary structure, monomer.

In terms of biological role, metallothioneins have a high content of cysteine residues that bind various heavy metals; these proteins are transcriptionally regulated by both heavy metals and glucocorticoids. This chain is Metallothionein-1C (MT1C), found in Sus scrofa (Pig).